We begin with the raw amino-acid sequence, 221 residues long: Ribonuclease T (221 aa).

In terms of domain architecture, Exonuclease spans 21 to 195; the sequence is VVIDIESAGF…YDTIQTAYLF (175 aa). Residues aspartate 24, glutamate 26, histidine 182, and aspartate 187 each contribute to the Mg(2+) site. Histidine 182 acts as the Proton donor/acceptor in catalysis.

It belongs to the RNase T family. In terms of assembly, homodimer. Mg(2+) is required as a cofactor.

Functionally, trims short 3' overhangs of a variety of RNA species, leaving a one or two nucleotide 3' overhang. Responsible for the end-turnover of tRNA: specifically removes the terminal AMP residue from uncharged tRNA (tRNA-C-C-A). Also appears to be involved in tRNA biosynthesis. The chain is Ribonuclease T from Buchnera aphidicola subsp. Cinara cedri (strain Cc).